Consider the following 504-residue polypeptide: ATP synthase subunit alpha (504 aa).

169–176 (GDRQIGKT) provides a ligand contact to ATP.

The protein belongs to the ATPase alpha/beta chains family. As to quaternary structure, F-type ATPases have 2 components, CF(1) - the catalytic core - and CF(0) - the membrane proton channel. CF(1) has five subunits: alpha(3), beta(3), gamma(1), delta(1), epsilon(1). CF(0) has three main subunits: a(1), b(2) and c(9-12). The alpha and beta chains form an alternating ring which encloses part of the gamma chain. CF(1) is attached to CF(0) by a central stalk formed by the gamma and epsilon chains, while a peripheral stalk is formed by the delta and b chains.

It is found in the cell membrane. It catalyses the reaction ATP + H2O + 4 H(+)(in) = ADP + phosphate + 5 H(+)(out). Functionally, produces ATP from ADP in the presence of a proton gradient across the membrane. The alpha chain is a regulatory subunit. The protein is ATP synthase subunit alpha of Syntrophomonas wolfei subsp. wolfei (strain DSM 2245B / Goettingen).